A 502-amino-acid chain; its full sequence is Medium/long-chain-fatty-acid--CoA ligase FadD17 (502 aa).

The protein belongs to the ATP-dependent AMP-binding enzyme family.

It carries out the reaction a medium-chain fatty acid + ATP + CoA = a medium-chain fatty acyl-CoA + AMP + diphosphate. The enzyme catalyses a long-chain fatty acid + ATP + CoA = a long-chain fatty acyl-CoA + AMP + diphosphate. Its pathway is lipid metabolism; fatty acid biosynthesis. Functionally, catalyzes the activation of medium/long-chain fatty acids as acyl-coenzyme A (acyl-CoA), which are then transferred to the multifunctional polyketide synthase (PKS) type III for further chain extension. This Mycobacterium bovis (strain ATCC BAA-935 / AF2122/97) protein is Medium/long-chain-fatty-acid--CoA ligase FadD17 (fadD17).